A 298-amino-acid chain; its full sequence is Ketohexokinase (298 aa).

The beta-D-fructose site is built by D15, G41, N42, and N45. Residues R108, 226 to 229, and 255 to 258 contribute to the ATP site; these read AEEG and GAGD. Beta-D-fructose is bound at residue D258.

Belongs to the carbohydrate kinase PfkB family. Homodimer.

The enzyme catalyses beta-D-fructose + ATP = beta-D-fructose 1-phosphate + ADP + H(+). It participates in carbohydrate metabolism; fructose metabolism. Its activity is regulated as follows. Requires potassium. Inhibition by ADP. Its function is as follows. Catalyzes the phosphorylation of the ketose sugar fructose to fructose-1-phosphate. The polypeptide is Ketohexokinase (Mus musculus (Mouse)).